A 362-amino-acid polypeptide reads, in one-letter code: Probable S-adenosylmethionine-dependent methyltransferase At5g37990 (362 aa).

The S-adenosyl-L-homocysteine site is built by Tyr-19, Cys-66, Asn-71, Asp-107, Ser-136, and Phe-137. The Mg(2+) site is built by Asn-175, Glu-261, and Phe-263.

This sequence belongs to the methyltransferase superfamily. Type-7 methyltransferase family. As to quaternary structure, homodimer. It depends on Mg(2+) as a cofactor.

The polypeptide is Probable S-adenosylmethionine-dependent methyltransferase At5g37990 (Arabidopsis thaliana (Mouse-ear cress)).